The following is a 292-amino-acid chain: uncharacterized protein (292 aa).

Residues 62–81 are disordered; sequence ESSSDSDMGFHESQQNQKSN.

This is an uncharacterized protein from Homo sapiens (Human).